The sequence spans 380 residues: Cytochrome b (380 aa).

The next 4 helical transmembrane spans lie at 34 to 54 (FGSLLGICLLTQILTGLLLAT), 78 to 99 (WLIRNLHANGASFFFICIYLHI), 114 to 134 (WNTGVILLLALMATAFVGYVL), and 179 to 199 (FFALHFLLPFMIAGLAFIHLT). 2 residues coordinate heme b: His-84 and His-98. Heme b contacts are provided by His-183 and His-197. His-202 lines the a ubiquinone pocket. 4 helical membrane-spanning segments follow: residues 227 to 247 (LKDILGFIIMFLPLTTLALFS), 289 to 309 (LGGVLALAASVLVLFLTPLLH), 321 to 341 (LSQLLFWTLVANLLILTWVGS), and 348 to 368 (FIIIGQLASLAYFTILLLLFP).

This sequence belongs to the cytochrome b family. In terms of assembly, the cytochrome bc1 complex contains 11 subunits: 3 respiratory subunits (MT-CYB, CYC1 and UQCRFS1), 2 core proteins (UQCRC1 and UQCRC2) and 6 low-molecular weight proteins (UQCRH/QCR6, UQCRB/QCR7, UQCRQ/QCR8, UQCR10/QCR9, UQCR11/QCR10 and a cleavage product of UQCRFS1). This cytochrome bc1 complex then forms a dimer. It depends on heme b as a cofactor.

The protein resides in the mitochondrion inner membrane. Component of the ubiquinol-cytochrome c reductase complex (complex III or cytochrome b-c1 complex) that is part of the mitochondrial respiratory chain. The b-c1 complex mediates electron transfer from ubiquinol to cytochrome c. Contributes to the generation of a proton gradient across the mitochondrial membrane that is then used for ATP synthesis. The sequence is that of Cytochrome b (MT-CYB) from Uria lomvia (Thick-billed murre).